The sequence spans 379 residues: Putative acetyl-CoA C-acetyltransferase VraB (379 aa).

Residue Cys86 is the Acyl-thioester intermediate of the active site. His338 functions as the Proton acceptor in the catalytic mechanism.

Belongs to the thiolase-like superfamily. Thiolase family.

This chain is Putative acetyl-CoA C-acetyltransferase VraB (vraB), found in Staphylococcus aureus (strain Mu3 / ATCC 700698).